A 511-amino-acid chain; its full sequence is Maturase K (511 aa).

This sequence belongs to the intron maturase 2 family. MatK subfamily.

Its subcellular location is the plastid. It is found in the chloroplast. Functionally, usually encoded in the trnK tRNA gene intron. Probably assists in splicing its own and other chloroplast group II introns. This Nandina domestica (Heavenly bamboo) protein is Maturase K.